The following is a 317-amino-acid chain: Ribose-phosphate pyrophosphokinase (317 aa).

Residues 43 to 45 (DGE) and 102 to 103 (RQ) contribute to the ATP site. ADP contacts are provided by lysine 106 and arginine 110. Histidine 136 contributes to the Mg(2+) binding site. Residues glutamine 141 and 149–150 (DH) each bind ADP. Mg(2+) is bound at residue aspartate 175. Lysine 198 is an active-site residue. Residues arginine 200, aspartate 224, and 228 to 232 (DTAGT) each bind D-ribose 5-phosphate. 311 to 313 (SVS) contacts ADP.

This sequence belongs to the ribose-phosphate pyrophosphokinase family. Class I subfamily. Homohexamer; trimer of dimers. Mg(2+) is required as a cofactor.

The protein resides in the cytoplasm. The catalysed reaction is D-ribose 5-phosphate + ATP = 5-phospho-alpha-D-ribose 1-diphosphate + AMP + H(+). The protein operates within metabolic intermediate biosynthesis; 5-phospho-alpha-D-ribose 1-diphosphate biosynthesis; 5-phospho-alpha-D-ribose 1-diphosphate from D-ribose 5-phosphate (route I): step 1/1. Activated by inorganic phosphate, and to a lesser extent by sulfate ions. In addition to form a complex with ATP, Mg(2+) also acts as a cofactor. Strongly inhibited by ADP through competitive binding at the activation site and at a specific allosteric site. Less strongly inhibited by alpha,beta-methylene ATP (mADP), AMP, GDP, GMP and UTP. Involved in the biosynthesis of the central metabolite phospho-alpha-D-ribosyl-1-pyrophosphate (PRPP) via the transfer of pyrophosphoryl group from ATP to 1-hydroxyl of ribose-5-phosphate (Rib-5-P). This chain is Ribose-phosphate pyrophosphokinase, found in Bacillus subtilis (strain 168).